The sequence spans 209 residues: CASP-like protein 1A1 (209 aa).

Residues 1-26 (MEEAKHNEAEEAQGIEAREAKQIEAG) are disordered. Topologically, residues 1–49 (MEEAKHNEAEEAQGIEAREAKQIEAGETSRSSRKLITFEPKLVINKGIS) are cytoplasmic. Residues 50 to 70 (VLGFVLRLFAVFGTIGSALAM) traverse the membrane as a helical segment. Residues 71–95 (GTTHESVVSLSQLVLLKVKYSDLPT) lie on the Extracellular side of the membrane. Residues 96 to 116 (LMFFVVANAISGGYLVLSLPV) traverse the membrane as a helical segment. The Cytoplasmic segment spans residues 117–130 (SIFHIFSTQAKTSR). A helical membrane pass occupies residues 131 to 151 (IILLVVDTVMLALVSSGASAA). Topologically, residues 152–183 (TATVYLAHEGNTTANWPPICQQFDGFCERISG) are extracellular. Asn162 is a glycosylation site (N-linked (GlcNAc...) asparagine). The helical transmembrane segment at 184–204 (SLIGSFCAVILLMLIVINSAI) threads the bilayer. Residues 205–209 (SLSRH) lie on the Cytoplasmic side of the membrane.

It belongs to the Casparian strip membrane proteins (CASP) family. Homodimer and heterodimers. Expressed in the root endodermis.

It localises to the cell membrane. This is CASP-like protein 1A1 from Arabidopsis thaliana (Mouse-ear cress).